We begin with the raw amino-acid sequence, 43 residues long: Metallothionein-2 (43 aa).

At Met1 the chain carries Blocked amino end (Met).

Belongs to the metallothionein superfamily. Type 5 family.

Functionally, this protein binds cations of several transition elements. Thought to be involved in metal ion homeostasis. The protein is Metallothionein-2 (MtnB) of Drosophila melanogaster (Fruit fly).